Here is a 632-residue protein sequence, read N- to C-terminus: Phosphoglucomutase, chloroplastic (632 aa).

The transit peptide at 1 to 72 (MAMESALTST…PSSPSTSVAQ (72 aa)) directs the protein to the chloroplast. Alpha-D-glucose 1,6-bisphosphate contacts are provided by arginine 97 and serine 190. Catalysis depends on serine 190, which acts as the Phosphoserine intermediate. Positions 190, 355, 357, and 359 each coordinate Mg(2+). Serine 190 is subject to Phosphoserine. Alpha-D-glucose 1,6-bisphosphate contacts are provided by aspartate 359, arginine 360, threonine 423, glutamate 442, serine 444, and lysine 455.

Belongs to the phosphohexose mutase family. In terms of assembly, monomer. Requires Mg(2+) as cofactor.

The protein resides in the plastid. The protein localises to the chloroplast. The enzyme catalyses alpha-D-glucose 1-phosphate = alpha-D-glucose 6-phosphate. The catalysed reaction is O-phospho-L-seryl-[protein] + alpha-D-glucose 1-phosphate = alpha-D-glucose 1,6-bisphosphate + L-seryl-[protein]. It carries out the reaction alpha-D-glucose 1,6-bisphosphate + L-seryl-[protein] = O-phospho-L-seryl-[protein] + alpha-D-glucose 6-phosphate. With respect to regulation, inhibited by the Calvin cycle intermediates fructose-1,6-bisphosphate and ribulose-1,5-bisphosphate. Its function is as follows. Catalyzes the reversible isomerization of alpha-D-glucose 1-phosphate to alpha-D-glucose 6-phosphate. The mechanism proceeds via the intermediate compound alpha-D-glucose 1,6-bisphosphate. This enzyme participates in both the breakdown and synthesis of glucose. Promotes gravitropic responses, negative in shoots but positive in roots, by facilitating starch granules (statoliths) formation. This is Phosphoglucomutase, chloroplastic (PGMP) from Solanum tuberosum (Potato).